We begin with the raw amino-acid sequence, 303 residues long: Crk-like protein (303 aa).

The region spanning 14-102 (WYMGPVTRQE…LDTTTLIEPA (89 aa)) is the SH2 domain. Residues 123–183 (ENLEYVRTLY…PVPYVEKLVR (61 aa)) enclose the SH3 1 domain. Phosphotyrosine is present on tyrosine 127. Residues 184-203 (SSPHGKHGNRNSNSYGIPEP) are disordered. At tyrosine 207 the chain carries Phosphotyrosine. Residues 235–296 (NGPVFAKAIQ…PFTHVKIFDP (62 aa)) form the SH3 2 domain.

The protein belongs to the CRK family. In terms of assembly, interacts with DOCK2 and EPOR. Interacts with phosphorylated CBLB and IRS4. Interacts with INPP5D/SHIP1. Interacts with BCAR1/CAS and NEDD9/HEF1. Phosphorylated on tyrosine. Phosphorylation is prominent during early development, but decreases at later embryonic stages and in newborn mice.

Functionally, may mediate the transduction of intracellular signals. This is Crk-like protein (Crkl) from Mus musculus (Mouse).